A 481-amino-acid polypeptide reads, in one-letter code: UDP-glucose 6-dehydrogenase (481 aa).

NAD(+)-binding positions include 16–21, aspartate 41, lysine 46, 94–98, 135–136, and glutamate 172; these read GAGYVG, VNTPT, and ST. Residues 168–172, 227–231, arginine 267, and 274–280 each bind substrate; these read EFLAE, KLVAN, and QASVGFG. Cysteine 283 acts as the Nucleophile in catalysis. 283–286 serves as a coordination point for NAD(+); sequence CFQK. 345–346 is a binding site for substrate; it reads FK. Arginine 353 provides a ligand contact to NAD(+). Position 447 (arginine 447) interacts with substrate.

It belongs to the UDP-glucose/GDP-mannose dehydrogenase family. As to expression, expressed in the vulva and in oocytes.

It catalyses the reaction UDP-alpha-D-glucose + 2 NAD(+) + H2O = UDP-alpha-D-glucuronate + 2 NADH + 3 H(+). It participates in nucleotide-sugar biosynthesis; UDP-alpha-D-glucuronate biosynthesis; UDP-alpha-D-glucuronate from UDP-alpha-D-glucose: step 1/1. In terms of biological role, involved in the biosynthesis of glycosaminoglycans; hyaluronan, chondroitin sulfate, and heparan sulfate. This chain is UDP-glucose 6-dehydrogenase (sqv-4), found in Caenorhabditis elegans.